Consider the following 515-residue polypeptide: Maturase K (515 aa).

The protein belongs to the intron maturase 2 family. MatK subfamily.

The protein resides in the plastid. Its subcellular location is the chloroplast. Functionally, usually encoded in the trnK tRNA gene intron. Probably assists in splicing its own and other chloroplast group II introns. The polypeptide is Maturase K (Picea mariana (Black spruce)).